Consider the following 333-residue polypeptide: Fructose-1,6-bisphosphatase class 1 1 (333 aa).

4 residues coordinate Mg(2+): Glu81, Asp100, Leu102, and Asp103. Residues 103–106 and Asn191 each bind substrate; that span reads DGSS. Mg(2+) is bound at residue Glu263.

It belongs to the FBPase class 1 family. As to quaternary structure, homotetramer. Requires Mg(2+) as cofactor.

The protein resides in the cytoplasm. It carries out the reaction beta-D-fructose 1,6-bisphosphate + H2O = beta-D-fructose 6-phosphate + phosphate. Its pathway is carbohydrate biosynthesis; gluconeogenesis. With respect to regulation, fructose-1,6-bisphosphatase II is not light-activated. In Cereibacter sphaeroides (Rhodobacter sphaeroides), this protein is Fructose-1,6-bisphosphatase class 1 1.